Consider the following 112-residue polypeptide: Cytochrome c (112 aa).

Residues Cys23, Cys26, His27, and Met89 each coordinate heme c.

The protein belongs to the cytochrome c family. Post-translationally, binds 1 heme c group covalently per subunit.

Its subcellular location is the mitochondrion intermembrane space. Electron carrier protein. The oxidized form of the cytochrome c heme group can accept an electron from the heme group of the cytochrome c1 subunit of cytochrome reductase. Cytochrome c then transfers this electron to the cytochrome oxidase complex, the final protein carrier in the mitochondrial electron-transport chain. The chain is Cytochrome c (CYC1) from Chlamydomonas reinhardtii (Chlamydomonas smithii).